The following is a 151-amino-acid chain: Transmembrane protein 239 (151 aa).

3 helical membrane passes run 61-81 (LWGLEGTLYLLLALMLCHALF), 85-105 (SYLLSSLWPVVAVMWSHLLPA), and 116-138 (ALLFAASFLLLFSTLLSLVGLLT).

It is found in the membrane. This Mus musculus (Mouse) protein is Transmembrane protein 239 (Tmem239).